A 319-amino-acid chain; its full sequence is Chromoplast-specific carotenoid-associated protein C1, chromoplastic (319 aa).

Residues 1–55 (MTSIAFWNAFTVNPFPAAARRSPPPLTPFTSGALSPARKPRILEISHPRTLPSFR) constitute a chromoplast transit peptide.

It belongs to the PAP/fibrillin family. In terms of tissue distribution, expressed in flower buds and floral lip tissues. Not detected in roots and leaves. Specifically expressed in conical papillate cells of adaxial epidermis of lip tissues.

It is found in the plastid. Its subcellular location is the chromoplast. In terms of biological role, may be involved in carotenoid sequestration within chromoplasts. The protein is Chromoplast-specific carotenoid-associated protein C1, chromoplastic (CHRC1) of Oncidium hybrid cultivar (Orchid).